Reading from the N-terminus, the 334-residue chain is Replication-associated protein (334 aa).

The region spanning 9-111 is the CRESS-DNA virus Rep endonuclease domain; the sequence is RLQSKYVFLT…DGDIKTRGDF (103 aa). The RCR-1 motif lies at 16-19; sequence FLTY. A divalent metal cation is bound by residues Glu-50, His-58, and His-60. Residues 58–60 carry the RCR-2 motif; the sequence is HYH. The active-site For DNA cleavage activity is the Tyr-98. Positions 98 to 101 match the RCR-3 motif; sequence YISK. Position 102 (Asp-102) interacts with a divalent metal cation. The oligomerization stretch occupies residues 160-172; that stretch reads SANKLFPPQPEQY. 213-220 provides a ligand contact to ATP; sequence GPTRTGKT. The transactivation stretch occupies residues 236 to 254; it reads IDFTNYDEHATYNIIDDIP. Residues 276-286 carry the Nuclear localization signal motif; sequence KYGKKKKIKGG.

This sequence belongs to the geminiviridae Rep protein family. Homooligomer. Rep binds to repeated DNA motifs (iterons). Forms the O-complex, which is a Rep-DNA complex involved in the initiation of RCR. Part of the C- and V-complexes which are RepA-Rep-DNA complexes involved in the c-sense and v-sense transcription. The cofactor is Mg(2+). It depends on Mn(2+) as a cofactor.

The protein localises to the host nucleus. Functionally, essential for the replication of viral ssDNA. The closed circular ssDNA genome is first converted to a superhelical dsDNA. Rep binds a specific region at the genome origin of replication. It introduces an endonucleolytic nick within the conserved sequence 5'-TAATATTAC-3' in the intergenic region of the genome present in all geminiviruses, thereby initiating the rolling circle replication (RCR). Following cleavage, binds covalently to the 5'-phosphate of DNA as a tyrosyl ester. The cleavage gives rise to a free 3'-OH that serves as a primer for the cellular DNA polymerase. The polymerase synthesizes the (+) strand DNA by rolling circle mechanism. After one round of replication, a Rep-catalyzed nucleotidyl transfer reaction releases a circular single-stranded virus genome, thereby terminating the replication. Displays origin-specific DNA cleavage, nucleotidyl transferase, ATPase and helicase activities. Acts a an inhibitor of C-sense gene transcription. The polypeptide is Replication-associated protein (Phaseolus vulgaris (Kidney bean)).